A 588-amino-acid chain; its full sequence is MRAWLLLLAVLATFQTIVRVASTEDISQRFIAAIAPVAAHIPLASASGSGSGRSGSRSVGASTSTALAKAFNPFSEPASFSDSDKSHRSKTNKKPSKSDANRQFNEVHKPRTDQLENSKNKSKQLVNKPNHNKMAVKEQRSHHKKSHHHRSHQPKQASASTESHQSSSIESIFVEEPTLVLDREVASINVPANAKAIIAEQGPSTYSKEALIKDKLKPDPSTLVEIEKSLLSLFNMKRPPKIDRSKIIIPEPMKKLYAEIMGHELDSVNIPKPGLLTKSANTVRSFTHKDSKIDDRFPHHHRFRLHFDVKSIPADEKLKAAELQLTRDALSQQVVASRSSANRTRYQVLVYDITRVGVRGQREPSYLLLDTKTVRLNSTDTVSLDVQPAVDRWLASPQRNYGLLVEVRTVRSLKPAPHHHVRLRRSADEAHERWQHKQPLLFTYTDDGRHKARSIRDVSGGEGGGKGGRNKRQPRRPTRRKNHDDTCRRHSLYVDFSDVGWDDWIVAPLGYDAYYCHGKCPFPLADHFNSTNHAVVQTLVNNMNPGKVPKACCVPTQLDSVAMLYLNDQSTVVLKNYQEMTVVGCGCR.

The N-terminal stretch at 1–23 (MRAWLLLLAVLATFQTIVRVAST) is a signal peptide. Positions 24–456 (EDISQRFIAA…DGRHKARSIR (433 aa)) are excised as a propeptide. The tract at residues 74–169 (FSEPASFSDS…STESHQSSSI (96 aa)) is disordered. Over residues 96–119 (SKSDANRQFNEVHKPRTDQLENSK) the composition is skewed to basic and acidic residues. The N-linked (GlcNAc...) asparagine glycan is linked to Asn-120. Basic residues predominate over residues 140 to 153 (RSHHKKSHHHRSHQ). Residues 156–169 (QASASTESHQSSSI) show a composition bias toward low complexity. Residues Asn-342 and Asn-377 are each glycosylated (N-linked (GlcNAc...) asparagine). The interval 454–484 (SIRDVSGGEGGGKGGRNKRQPRRPTRRKNHD) is disordered. A compositionally biased stretch (basic residues) spans 468-481 (GRNKRQPRRPTRRK). 3 disulfide bridges follow: Cys-487–Cys-553, Cys-516–Cys-585, and Cys-520–Cys-587. Asn-529 carries N-linked (GlcNAc...) asparagine glycosylation.

It belongs to the TGF-beta family. As to quaternary structure, heterodimers of scw/dpp are the active subunit, dpp/dpp homodimers elicit a basal response and scw/scw homodimers alone are ineffective in specifying a dorsal pattern. Component of a complex composed of dpp, sog and tsg. Interacts with nord and gbb; the interaction interferes with dpp secretion. In terms of tissue distribution, expressed in the dorsal region of the embryo, and becomes enriched in a dorsal midline stripe just prior to gastrulation. Expressed in midgut mesoderm and in two overlapping regions of the embryonic large intestine. Expressed in a long-range concentration gradient in the wing imaginal disk.

The protein resides in the secreted. Its function is as follows. Required during oogenesis for eggshell patterning and dorsal/ventral patterning of the embryo. Acts as a morphogen during embryogenesis to pattern the dorsal/ventral axis, specifying dorsal ectoderm and amnioserosa cell fate within the dorsal half of the embryo; this activity is antagonized by binding to sog and tsg. Induces the formation of visceral mesoderm and the heart in early embryos. Required later in embryogenesis for dorsal closure and patterning of the hindgut. Also functions postembryonically as a long-range morphogen during imaginal disk development; is responsible for the progression of the morphogenetic furrow during eye development. Patterns the wing imaginal disk along its anterior/posterior axis and has a role in positioning pro-veins. Also required to subdivide the wing disk along the proximal/distal axis into body wall (notum) and wing. Ensures the correct architecture of wing epithelial cells. Has multiple roles in the developing tracheal system, controlling directed tracheal cell migration during embryogenesis and later specifying the fate of fusion cells in the tracheal branches. Required for viability of larvae. Essential for the maintenance and division of germline stem cells in the ovary. Signals via the type I receptor tkv, the type II receptor punt, and in some tissues via the type I receptor sax, in a signaling cascade that leads to activation and repression of target genes. This Drosophila melanogaster (Fruit fly) protein is Protein decapentaplegic (dpp).